A 497-amino-acid polypeptide reads, in one-letter code: Pancreatic alpha-amylase (497 aa).

Q1 is subject to Pyrrolidone carboxylic acid. 3 disulfides stabilise this stretch: C28–C86, C70–C115, and C141–C160. Positions 100, 158, and 167 each coordinate Ca(2+). Residue R195 coordinates chloride. The active-site Nucleophile is the D197. H201 serves as a coordination point for Ca(2+). The Proton donor role is filled by E233. N298 and R337 together coordinate chloride. 2 disulfides stabilise this stretch: C379–C385 and C451–C463.

The protein belongs to the glycosyl hydrolase 13 family. As to quaternary structure, monomer. The cofactor is Ca(2+). Chloride is required as a cofactor.

Its subcellular location is the secreted. It is found in the extracellular space. It catalyses the reaction Endohydrolysis of (1-&gt;4)-alpha-D-glucosidic linkages in polysaccharides containing three or more (1-&gt;4)-alpha-linked D-glucose units.. The polypeptide is Pancreatic alpha-amylase (Struthio camelus (Common ostrich)).